A 135-amino-acid chain; its full sequence is Lymphocyte antigen 6B (135 aa).

Residues 1–26 form the signal peptide; that stretch reads MNRSCAMKSCVLILLLALLCAERAQG. A UPAR/Ly6 domain is found at 27 to 119; the sequence is LNCYNCTMIP…PTGGSTWTMA (93 aa). 5 disulfides stabilise this stretch: Cys-29-Cys-54, Cys-32-Cys-41, Cys-47-Cys-75, Cys-79-Cys-99, and Cys-100-Cys-105. Gly-113 carries GPI-anchor amidated glycine lipidation. A propeptide spans 114–135 (removed in mature form); the sequence is STWTMAGVLLFILGSVLLQTLL.

The protein resides in the cell membrane. This is Lymphocyte antigen 6B (Ly6b) from Rattus norvegicus (Rat).